A 478-amino-acid chain; its full sequence is Cell division protein FtsZ homolog 2-1, chloroplastic (478 aa).

The segment at 86–112 (EGTSTIVNPRKETSSGPVVEDFEEPSA) is disordered. Position 128–132 (128–132 (GGGSN)) interacts with GTP. A Phosphoserine; by PGK1 modification is found at Ser143. GTP contacts are provided by residues 217 to 219 (GTG), Glu248, and Arg252. Thr286 carries the phosphothreonine; by PGK1 modification. Residue Asp296 participates in GTP binding.

It belongs to the FtsZ family. In terms of assembly, aggregates to form a contractile ring-like structure; contraction of the ring was accompanied by an increase in the filament turnover rate. Self-interacts and binds to FTSZ1 in heteromers to form two morphologically distinct types of filaments, termed type-I (smooth filaments) and -II (rough filaments), in a GTP-dependent manner; the GDP-induced disassembly is inhibited by ARC6. Interacts (via C-terminus) with ARC6; this interaction enables ARC3 binding to FTSZ2. Part of a complex made of ARC3, ARC6, FTSZ1 and FTSZ2. Binds to MCD1 in an ARC6-dependent manner. Binds to CDP1/PARC6. Part of a complex made of CDP1/PARC6, ARC3 and FtsZ proteins in the middle of the plastid; this complex enhances the dynamics of Z rings during chloroplast division. Binds to PGK1. In terms of processing, filaments containing FTSZ2-1 are stabilized when in complex with GTP but destabilized after conversion of GTP into GDP; ARC6 conteracts this destabilisation by preventing the dissociation of GDP-bound FTSZ2 molecules thus inhibiting filament disassembly whereas ARC3 promotes GTPase activity thus accelerating the conversion of GTP into GDP and triggering FtsZ2 filaments disassembly. Phosphorylation at Ser-143 is necessary for interactions with ARC3, ARC6, FTSZ1 and FTSZ2-2. Phosphorylations at Ser-143 and Thr-286 are required for the formation of contractile ring at the chloroplast midpoint.

Its subcellular location is the plastid. It localises to the chloroplast stroma. The protein localises to the chloroplast thylakoid membrane. GTPase activity is enhanced by ARC3. Exhibits GTPase activity which converts GTP ligands to GDP. Component of the plastid division machinery consisting in a binary fission accomplished by the simultaneous constriction of the FtsZ ring on the stromal side of the inner envelope membrane, and the ARC5 ring on the cytosolic side of the outer envelope membrane. Required for plastid division in a dose-dependent manner. In the vegetative shoot apex, at the shoot apical meristem (SAM), where the proplastid-to-chloroplast transition takes place, major contributor of plastid division in the L1 and L3 layers and contributes equally with FTSZ1 in the L2 layer. This is Cell division protein FtsZ homolog 2-1, chloroplastic from Arabidopsis thaliana (Mouse-ear cress).